The following is a 205-amino-acid chain: uncharacterized protein (205 aa).

This is an uncharacterized protein from Methanococcus vannielii (strain ATCC 35089 / DSM 1224 / JCM 13029 / OCM 148 / SB).